The following is a 718-amino-acid chain: Peroxisomal bifunctional enzyme (718 aa).

Residues 2-280 (ARYELVKRSV…FAQRTAEKWT (279 aa)) are enoyl-CoA hydratase / isomerase. Substrate is bound at residue G100. The segment at 281–567 (LPSGAQWNNS…DMVCQQGRFG (287 aa)) is 3-hydroxyacyl-CoA dehydrogenase. A Microbody targeting signal motif is present at residues 716-718 (SHL).

This sequence in the N-terminal section; belongs to the enoyl-CoA hydratase/isomerase family. In the C-terminal section; belongs to the 3-hydroxyacyl-CoA dehydrogenase family. Monomer.

Its subcellular location is the peroxisome. The enzyme catalyses a (3S)-3-hydroxyacyl-CoA = a (2E)-enoyl-CoA + H2O. It carries out the reaction a 4-saturated-(3S)-3-hydroxyacyl-CoA = a (3E)-enoyl-CoA + H2O. It catalyses the reaction a (3Z)-enoyl-CoA = a 4-saturated (2E)-enoyl-CoA. The catalysed reaction is a (3E)-enoyl-CoA = a 4-saturated (2E)-enoyl-CoA. The enzyme catalyses a (3S)-3-hydroxyacyl-CoA + NAD(+) = a 3-oxoacyl-CoA + NADH + H(+). It carries out the reaction (2S,3S)-3-hydroxy-2-methylbutanoyl-CoA = (2E)-2-methylbut-2-enoyl-CoA + H2O. It catalyses the reaction (3S)-hydroxyhexadecanoyl-CoA + NAD(+) = 3-oxohexadecanoyl-CoA + NADH + H(+). The catalysed reaction is (3S)-hydroxyhexadecanoyl-CoA = (2E)-hexadecenoyl-CoA + H2O. The enzyme catalyses (2E)-hexadecenedioyl-CoA + H2O = (3S)-hydroxyhexadecanedioyl-CoA. It carries out the reaction (3S)-hydroxyhexadecanedioyl-CoA + NAD(+) = 3-oxohexadecanedioyl-CoA + NADH + H(+). It catalyses the reaction (3E,5Z)-tetradecadienoyl-CoA = (2E,5Z)-tetradecadienoyl-CoA. The catalysed reaction is (3E,5Z)-octadienoyl-CoA = (2E,5Z)-octadienoyl-CoA. The enzyme catalyses (3S)-hydroxydecanoyl-CoA + NAD(+) = 3-oxodecanoyl-CoA + NADH + H(+). It carries out the reaction (3E)-decenoyl-CoA = (2E)-decenoyl-CoA. It catalyses the reaction (3Z)-hexenoyl-CoA = (2E)-hexenoyl-CoA. The catalysed reaction is (3E)-hexenoyl-CoA = (2E)-hexenoyl-CoA. The enzyme catalyses (3S)-hydroxydecanoyl-CoA = (2E)-decenoyl-CoA + H2O. It carries out the reaction (3S)-hydroxyhexanoyl-CoA = (2E)-hexenoyl-CoA + H2O. Its pathway is lipid metabolism; fatty acid beta-oxidation. Its function is as follows. Peroxisomal trifunctional enzyme possessing 2-enoyl-CoA hydratase, 3-hydroxyacyl-CoA dehydrogenase, and delta 3, delta 2-enoyl-CoA isomerase activities. Catalyzes two of the four reactions of the long straight chain fatty acids peroxisomal beta-oxidation pathway. Can also use branched-chain fatty acids such as 2-methyl-2E-butenoyl-CoA as a substrate, which is hydrated into (2S,3S)-3-hydroxy-2-methylbutanoyl-CoA. Optimal isomerase for 2,5 double bonds into 3,5 form isomerization in a range of enoyl-CoA species. Also able to isomerize both 3-cis and 3-trans double bonds into the 2-trans form in a range of enoyl-CoA species. Regulates the amount of medium-chain dicarboxylic fatty acids which are essential regulators of all fatty acid oxidation pathways. Also involved in the degradation of long-chain dicarboxylic acids through peroxisomal beta-oxidation. This chain is Peroxisomal bifunctional enzyme (ehhadh), found in Danio rerio (Zebrafish).